Reading from the N-terminus, the 440-residue chain is G-protein coupled receptor family C group 5 member C (440 aa).

The signal sequence occupies residues 1–22; sequence MATHRTLLMCLGLPLFFPGALA. Over 23–49 the chain is Extracellular; the sequence is QNHAPPGCSPDLDPLYYNLCDRSGAWG. A helical membrane pass occupies residues 50 to 70; it reads IVSEAVAGAGIITTFVLTIIL. Topologically, residues 71-84 are cytoplasmic; that stretch reads VASLPFVQDTKKRS. A helical transmembrane segment spans residues 85 to 105; that stretch reads LLGTQVFFLLGTLGLFCLVFA. The Extracellular segment spans residues 106–119; that stretch reads CVVKPDFSTCASRR. A helical transmembrane segment spans residues 120–140; that stretch reads FLFGVLFAICFSCLVAHVLSL. The Cytoplasmic segment spans residues 141–155; the sequence is NFLTRKNHGPRGWVI. Residues 156–176 traverse the membrane as a helical segment; sequence FTVALLLTLVEVIINTEWLII. Residues 177 to 207 lie on the Extracellular side of the membrane; the sequence is TLVRGGGQVSPLGNVSADSTMTSPCAIANMD. N190 carries N-linked (GlcNAc...) asparagine glycosylation. A helical transmembrane segment spans residues 208–228; that stretch reads FVMALIYVMLLLLTAFLGAWP. Over 229–240 the chain is Cytoplasmic; the sequence is TLCGRFKRWRKH. A helical transmembrane segment spans residues 241 to 261; sequence GVFVLLTTVISIAIWVVWIVM. At 262 to 278 the chain is on the extracellular side; it reads YTYGNEQHHSPTWDDPT. Residues 279–299 traverse the membrane as a helical segment; sequence LAIALAANAWTFVLFYVIPEV. The Cytoplasmic portion of the chain corresponds to 300–440; it reads SQVTKPSPEQ…QVFRNPYVWD (141 aa). S343, S382, S402, and S405 each carry phosphoserine. At Y413 the chain carries Phosphotyrosine. T422 is subject to Phosphothreonine.

This sequence belongs to the G-protein coupled receptor 3 family.

It localises to the cell membrane. In terms of biological role, this retinoic acid-inducible G-protein coupled receptor provide evidence for a possible interaction between retinoid and G-protein signaling pathways. The protein is G-protein coupled receptor family C group 5 member C (Gprc5c) of Mus musculus (Mouse).